The sequence spans 367 residues: Alanine racemase (367 aa).

Lys-40 (proton acceptor; specific for D-alanine) is an active-site residue. Lys-40 carries the post-translational modification N6-(pyridoxal phosphate)lysine. Arg-136 contributes to the substrate binding site. Tyr-263 functions as the Proton acceptor; specific for L-alanine in the catalytic mechanism. A substrate-binding site is contributed by Met-310.

The protein belongs to the alanine racemase family. It depends on pyridoxal 5'-phosphate as a cofactor.

It carries out the reaction L-alanine = D-alanine. The protein operates within amino-acid biosynthesis; D-alanine biosynthesis; D-alanine from L-alanine: step 1/1. Functionally, catalyzes the interconversion of L-alanine and D-alanine. May also act on other amino acids. This is Alanine racemase (alr) from Streptococcus pneumoniae serotype 19F (strain G54).